Here is a 136-residue protein sequence, read N- to C-terminus: Large ribosomal subunit protein uL16c (136 aa).

The protein belongs to the universal ribosomal protein uL16 family. Part of the 50S ribosomal subunit.

It is found in the plastid. The protein resides in the chloroplast. The polypeptide is Large ribosomal subunit protein uL16c (Saccharum hybrid (Sugarcane)).